Here is a 258-residue protein sequence, read N- to C-terminus: Indole-3-glycerol phosphate synthase (258 aa).

The protein belongs to the TrpC family.

The enzyme catalyses 1-(2-carboxyphenylamino)-1-deoxy-D-ribulose 5-phosphate + H(+) = (1S,2R)-1-C-(indol-3-yl)glycerol 3-phosphate + CO2 + H2O. Its pathway is amino-acid biosynthesis; L-tryptophan biosynthesis; L-tryptophan from chorismate: step 4/5. This Campylobacter jejuni subsp. doylei (strain ATCC BAA-1458 / RM4099 / 269.97) protein is Indole-3-glycerol phosphate synthase.